The primary structure comprises 151 residues: Peptide methionine sulfoxide reductase MsrB (151 aa).

Residues 9–132 form the MsrB domain; that stretch reads DGELKRTLTK…NSAALKFIPF (124 aa). Cys121 acts as the Nucleophile in catalysis.

Belongs to the MsrB Met sulfoxide reductase family.

It catalyses the reaction L-methionyl-[protein] + [thioredoxin]-disulfide + H2O = L-methionyl-(R)-S-oxide-[protein] + [thioredoxin]-dithiol. The protein is Peptide methionine sulfoxide reductase MsrB of Mycoplasma pneumoniae (strain ATCC 29342 / M129 / Subtype 1) (Mycoplasmoides pneumoniae).